We begin with the raw amino-acid sequence, 54 residues long: Conotoxin vc5a (54 aa).

A signal peptide spans 1–14 (VILLLITSTPSVDA). Residues 15–42 (RLKAKDNMPLASFHDNAKRTLQTRLINT) constitute a propeptide that is removed on maturation. At Pro49 the chain carries 4-hydroxyproline. An Isoleucine amide modification is found at Ile53.

Belongs to the conotoxin T superfamily. In terms of processing, contains 2 disulfide bonds that can be either 'C1-C3, C2-C4' or 'C1-C4, C2-C3', since these disulfide connectivities have been observed for conotoxins with cysteine framework V (for examples, see AC P0DQQ7 and AC P81755). In terms of tissue distribution, expressed by the venom duct.

The protein resides in the secreted. The sequence is that of Conotoxin vc5a from Conus victoriae (Queen Victoria cone).